A 1000-amino-acid polypeptide reads, in one-letter code: C-module-binding factor A (1000 aa).

Residues 113–280 (PREWQEYLSH…ISYFSSLPHT (168 aa)) form the JmjC domain. The segment at 489–544 (KIKCHRCEKRFKKFSIIFCTNCNARFCEQCVVNTFGQNFQVLMKRNEWECFCCKGL) adopts a PHD-type; atypical zinc-finger fold. Residues 492 to 542 (CHRCEKRFKKFSIIFCTNCNARFCEQCVVNTFGQNFQVLMKRNEWECFCCK) form an RING-type; degenerate zinc finger. Disordered regions lie at residues 561–647 (RILN…SSYS) and 660–818 (SYGS…KNLK). Composition is skewed to low complexity over residues 574-647 (NNNN…SSYS), 660-683 (SYGS…NNNN), 700-710 (SSSSGSGSSNS), 732-751 (NNNN…NNHH), and 760-789 (NNNN…STST). The span at 805 to 818 (DNDKPKGRPPKNLK) shows a compositional bias: basic and acidic residues. The a.T hook DNA-binding region spans 810–818 (KGRPPKNLK).

Monomer.

The protein resides in the nucleus. Functionally, transcriptional regulator involved in phagocytosis and pinocytosis. Both activates and represses transcription. Regulates expression of acaA, carA, pkaC, csaA, cotB and lagC. Promotes amplification of the tRNA gene-associated retrotransposon TRE5-A, a mobile genetic element formerly called as Dictyostelium repetitive element (DRE). Suppresses agnC and agnE encoding argonaute proteins which are part of a RNA interference pathway controlling TRE5-A amplification. Required for amplification of both sense and antisense RNA transcripts, but does not activate their promoters found in A-module and C-module of the TRE5-A, respectively. Nevertheless, binds to distinct DNA sequences containing A and T stretches within the C-module in vitro. In Dictyostelium discoideum (Social amoeba), this protein is C-module-binding factor A.